A 412-amino-acid polypeptide reads, in one-letter code: 1-deoxy-D-xylulose 5-phosphate reductoisomerase (412 aa).

Residues T5, G6, S7, I8, G31, R32, N33, and N125 each coordinate NADPH. K126 provides a ligand contact to 1-deoxy-D-xylulose 5-phosphate. NADPH is bound at residue E127. D151 is a binding site for Mn(2+). Residues S152, E153, S189, and H212 each coordinate 1-deoxy-D-xylulose 5-phosphate. E153 is a Mn(2+) binding site. G218 is an NADPH binding site. 4 residues coordinate 1-deoxy-D-xylulose 5-phosphate: S225, N230, K231, and E234. E234 serves as a coordination point for Mn(2+).

It belongs to the DXR family. It depends on Mg(2+) as a cofactor. Mn(2+) is required as a cofactor.

The enzyme catalyses 2-C-methyl-D-erythritol 4-phosphate + NADP(+) = 1-deoxy-D-xylulose 5-phosphate + NADPH + H(+). It participates in isoprenoid biosynthesis; isopentenyl diphosphate biosynthesis via DXP pathway; isopentenyl diphosphate from 1-deoxy-D-xylulose 5-phosphate: step 1/6. Its function is as follows. Catalyzes the NADPH-dependent rearrangement and reduction of 1-deoxy-D-xylulose-5-phosphate (DXP) to 2-C-methyl-D-erythritol 4-phosphate (MEP). The polypeptide is 1-deoxy-D-xylulose 5-phosphate reductoisomerase (Prochlorococcus marinus (strain SARG / CCMP1375 / SS120)).